We begin with the raw amino-acid sequence, 561 residues long: MYDFNLVLLLLQQMCVFLVIAWLMSKTPLFIPLMQVTVRLPHKFLCYIVFSIFCIMGTWFGLHIDDSIANTRAIGAVMGGLLGGPVVGGLVGLTGGLHRYSMGGMTALSCMISTIVEGLLGGLVHSILIRRGRTDKVFNPITAGAVTFVAEMVQMLIILAIARPYEDAVRLVSNIAAPMMVTNTVGAALFMRILLDKRAMFEKYTSAFSATALKVAASTEGILRQGFNEVNSMKVAQVLYQELDIGAVAITDREKLLAFTGIGDDHHLPGKPISSTYTLKAIETGEVVYADGNEVPYRCSLHPQCKLGSTLVIPLRGENQRVMGTIKLYEAKNRLFSSINRTLGEGIAQLLSAQILAGQYERQKAMLTQSEIKLLHAQVNPHFLFNALNTIKAVIRRDSEQASQLVQYLSTFFRKNLKRPSEFVTLADEIEHVNAYLQIEKARFQSRLQVNIAIPQELSQQQLPAFTLQPIVENAIKHGTSQLLDTGRVAISARREGQHLMLEIEDNAGLYQPVTNASGLGMNLVDKRLRERFGDDYGISVACEPDSYTRITLRLPWRDEA.

Residues 1–3 are Cytoplasmic-facing; sequence MYD. A helical transmembrane segment spans residues 4-24; sequence FNLVLLLLQQMCVFLVIAWLM. Residues 25 to 43 lie on the Periplasmic side of the membrane; it reads SKTPLFIPLMQVTVRLPHK. The chain crosses the membrane as a helical span at residues 44 to 64; it reads FLCYIVFSIFCIMGTWFGLHI. The Cytoplasmic segment spans residues 65 to 72; sequence DDSIANTR. Residues 73–93 form a helical membrane-spanning segment; it reads AIGAVMGGLLGGPVVGGLVGL. Over 94–108 the chain is Periplasmic; that stretch reads TGGLHRYSMGGMTAL. A helical transmembrane segment spans residues 109–129; the sequence is SCMISTIVEGLLGGLVHSILI. At 130–140 the chain is on the cytoplasmic side; the sequence is RRGRTDKVFNP. Residues 141-161 traverse the membrane as a helical segment; sequence ITAGAVTFVAEMVQMLIILAI. At 162–170 the chain is on the periplasmic side; it reads ARPYEDAVR. A helical membrane pass occupies residues 171–191; sequence LVSNIAAPMMVTNTVGAALFM. The Cytoplasmic segment spans residues 192 to 561; it reads RILLDKRAMF…TLRLPWRDEA (370 aa). A Histidine kinase domain is found at 354–559; the sequence is QILAGQYERQ…RITLRLPWRD (206 aa).

Post-translationally, autophosphorylated.

The protein localises to the cell inner membrane. It catalyses the reaction ATP + protein L-histidine = ADP + protein N-phospho-L-histidine.. Functionally, member of the two-component regulatory system BtsS/BtsR. BtsS is a high-affinity receptor for extracellular pyruvate that activates BtsR by phosphorylation. This Escherichia coli O6:H1 (strain CFT073 / ATCC 700928 / UPEC) protein is Sensor histidine kinase BtsS.